The chain runs to 428 residues: Putative gustatory receptor 2a (428 aa).

Residues 1–40 (MDTLRALEPLHRACQVCNLWPWRLAPPPDSEGILLRRSRW) lie on the Cytoplasmic side of the membrane. A helical membrane pass occupies residues 41 to 61 (LELYGWTVLIAATSFTVYGLF). The Extracellular segment spans residues 62–145 (QESSVEEKQD…INMRRQTSRR (84 aa)). The chain crosses the membrane as a helical span at residues 146 to 166 (AVWILWGYAVSQLLILGAKLL). Topologically, residues 167–173 (SRGDRFP) are cytoplasmic. Residues 174–194 (IYWISYLLPLLVCGLRYFQIF) traverse the membrane as a helical segment. Asn195 carries an N-linked (GlcNAc...) asparagine glycan. Over 195-250 (NATQLVRQRLDVLLVALQQLQLHQKGPAVDTVLEEQEDLEEAAMDRLIAVRLVYQR) the chain is Extracellular. A helical membrane pass occupies residues 251–271 (VWALVALLNRCYGLSMLMQVG). At 272–300 (NDFLAITSNCYWMFLNFRQSAASPFDILQ) the chain is on the cytoplasmic side. The helical transmembrane segment at 301–321 (IVASGVWSAPHLGNVLVLSLL) threads the bilayer. Residues 322 to 349 (CDRTAQCASRLALCLHQVSVDLRNESHN) lie on the Extracellular side of the membrane. Residue Asn345 is glycosylated (N-linked (GlcNAc...) asparagine). Residues 350–370 (ALVGTLVRYCAPLIILVPLQI) traverse the membrane as a helical segment. Residues 371–395 (TQFSLQLLHQRLHFSAAGFFNVDCT) lie on the Cytoplasmic side of the membrane. The chain crosses the membrane as a helical span at residues 396–416 (LLYTIVGATTTYLIILIQFHM). Residues 417-428 (SESTIGSDSNGQ) lie on the Extracellular side of the membrane.

It belongs to the insect chemoreceptor superfamily. Gustatory receptor (GR) family. Gr2a subfamily. Expressed in neurons of the terminal external chemosensory organ, the dorsal external chemosensory organ, as well as in the dorsal pharyngeal sense organ of larvae.

The protein localises to the cell membrane. In terms of biological role, probable gustatory receptor which mediates acceptance or avoidance behavior, depending on its not yet determined substrates. The chain is Putative gustatory receptor 2a (Gr2a) from Drosophila melanogaster (Fruit fly).